The following is a 517-amino-acid chain: RNA-binding region-containing protein 3 (517 aa).

The tract at residues M1–D26 is disordered. S21 carries the phosphoserine modification. The 76-residue stretch at R27–E102 folds into the RRM 1 domain. 2 disordered regions span residues V106–E130 and M213–R254. A Phosphoserine modification is found at S108. Over residues S115–E130 the composition is skewed to basic and acidic residues. The span at A217–P230 shows a compositional bias: pro residues. Acidic residues predominate over residues P231–E252. An RRM 2 domain is found at C420 to S503.

Component of the U11/U12 snRNPs that are part of the U12-type spliceosome. Found in a complex with m(7)G-capped U12 snRNA. Interacts with PDCD7.

It localises to the nucleus. In terms of biological role, participates in pre-mRNA U12-dependent splicing, performed by the minor spliceosome which removes U12-type introns. U12-type introns comprises less than 1% of all non-coding sequences. Binds to the 3'-stem-loop of m(7)G-capped U12 snRNA. This chain is RNA-binding region-containing protein 3 (RNPC3), found in Pongo abelii (Sumatran orangutan).